The chain runs to 1457 residues: Ras guanine nucleotide exchange factor C (1457 aa).

Residues 1-55 (MSVFTFGHGSNGALGLGKITDDTCPTPQKVNYFTEIDKRVKKVACGSYHTVFVTD) form an RCC1 1 repeat. Disordered regions lie at residues 75 to 196 (FYTS…PLLN), 209 to 264 (HYES…RINK), 282 to 313 (EQQQQPQQPQQNLKGIMNQPPLPTNDDLDEDP), and 376 to 404 (QQQLQQQQSMSSLQPSASSSSPSSSSLQT). Low complexity-rich tracts occupy residues 83–121 (TTTTTTTTSSTSATTTTTNGMVNEKNNNNKNNNGEKIVN) and 134–158 (SNTTNDSTSSSSTSTSSLSSSLPPT). 2 stretches are compositionally biased toward basic and acidic residues: residues 171–188 (IKLDKGIPHHRSTRELIQ) and 209–224 (HYESNEKSKDEMKDNE). Over residues 225–237 (NENEEDEDDDDDD) the composition is skewed to acidic residues. A compositionally biased stretch (basic and acidic residues) spans 238–249 (STIRQNEDKESS). Low complexity-rich tracts occupy residues 283–292 (QQQQPQQPQQ) and 376–403 (QQQLQQQQSMSSLQPSASSSSPSSSSLQ). 4 RCC1 repeats span residues 351–401 (GGNV…SSSS), 432–483 (WGEL…CYTE), 485–549 (GKMY…VLTQ), and 590–647 (SGEV…ALVE). Residues 650–971 (PKTKLALQLV…QVLLERMNQN (322 aa)) form the DH domain. Residues 703 to 715 (LPPSLKGLSGGLP) show a composition bias toward low complexity. The disordered stretch occupies residues 703–762 (LPPSLKGLSGGLPDNANNTIKNGKDKDNHHNGDSNGHHSNGHYHGNGNNGNNSITTSNSI). Basic and acidic residues predominate over residues 724-738 (NGKDKDNHHNGDSNG). The segment covering 739–762 (HHSNGHYHGNGNNGNNSITTSNSI) has biased composition (low complexity). The N-terminal Ras-GEF domain occupies 989–1109 (GNPQIMGGSL…SVSQIKLQYF (121 aa)). A disordered region spans residues 1127–1210 (LTQNEITTPP…NNNNNNNNLT (84 aa)). Residues 1138-1211 (LQIQNNNQNN…NNNNNNNLTN (74 aa)) adopt a coiled-coil conformation. The segment covering 1142–1210 (NNNQNNNLEN…NNNNNNNNLT (69 aa)) has biased composition (low complexity). The Ras-GEF domain occupies 1232 to 1454 (QPIEVAQTLT…DDKQAQKISS (223 aa)).

Promotes the exchange of Ras-bound GDP by GTP. This Dictyostelium discoideum (Social amoeba) protein is Ras guanine nucleotide exchange factor C (gefC).